The chain runs to 184 residues: ATP synthase subunit b, chloroplastic (184 aa).

A helical transmembrane segment spans residues 27–49 (FATNPINLSVVLGVLIFFGKGVL).

This sequence belongs to the ATPase B chain family. F-type ATPases have 2 components, F(1) - the catalytic core - and F(0) - the membrane proton channel. F(1) has five subunits: alpha(3), beta(3), gamma(1), delta(1), epsilon(1). F(0) has four main subunits: a(1), b(1), b'(1) and c(10-14). The alpha and beta chains form an alternating ring which encloses part of the gamma chain. F(1) is attached to F(0) by a central stalk formed by the gamma and epsilon chains, while a peripheral stalk is formed by the delta, b and b' chains.

The protein localises to the plastid. It is found in the chloroplast thylakoid membrane. Functionally, f(1)F(0) ATP synthase produces ATP from ADP in the presence of a proton or sodium gradient. F-type ATPases consist of two structural domains, F(1) containing the extramembraneous catalytic core and F(0) containing the membrane proton channel, linked together by a central stalk and a peripheral stalk. During catalysis, ATP synthesis in the catalytic domain of F(1) is coupled via a rotary mechanism of the central stalk subunits to proton translocation. In terms of biological role, component of the F(0) channel, it forms part of the peripheral stalk, linking F(1) to F(0). The protein is ATP synthase subunit b, chloroplastic of Ipomoea purpurea (Common morning glory).